Here is a 309-residue protein sequence, read N- to C-terminus: Foldase protein PrsA 2 (309 aa).

An N-terminal signal peptide occupies residues 1 to 20 (MKYRLIGVGASLVVAVMLTG). C21 is lipidated: N-palmitoyl cysteine. Residue C21 is the site of S-diacylglycerol cysteine attachment. One can recognise a PpiC domain in the interval 137-232 (MPMTTVQHIA…TADTKDKPTY (96 aa)).

The protein belongs to the PrsA family.

It localises to the cell membrane. It carries out the reaction [protein]-peptidylproline (omega=180) = [protein]-peptidylproline (omega=0). In terms of biological role, plays a major role in protein secretion by helping the post-translocational extracellular folding of several secreted proteins. This chain is Foldase protein PrsA 2 (prsA2), found in Lactiplantibacillus plantarum (strain ATCC BAA-793 / NCIMB 8826 / WCFS1) (Lactobacillus plantarum).